A 577-amino-acid chain; its full sequence is ER degradation-enhancing alpha-mannosidase-like protein 2 (577 aa).

Positions 1-21 (MPFRLLIPLGLVCVLLPLHHG) are cleaved as a signal peptide. Asn-90, Asn-112, Asn-289, and Asn-450 each carry an N-linked (GlcNAc...) asparagine glycan. The disordered stretch occupies residues 513–561 (PKRAQRKTVRSGPWEPQSGPATLSSPANQPREKQPAQQRTPLLSCPSQP). Composition is skewed to polar residues over residues 531 to 540 (GPATLSSPAN) and 547 to 561 (PAQQ…PSQP).

Belongs to the glycosyl hydrolase 47 family. N-glycosylated.

The protein localises to the endoplasmic reticulum lumen. Involved in the endoplasmic reticulum-associated degradation (ERAD) pathway that targets misfolded glycoproteins for degradation in an N-glycan-dependent manner. May initiate ERAD by promoting the first mannose trimming step of ERAD substrates, from Man9GlcNAc2 to Man8GlcNAc2. Seems to recognize and bind to exposed hydrophobic regions in target proteins. In Mus musculus (Mouse), this protein is ER degradation-enhancing alpha-mannosidase-like protein 2.